The sequence spans 329 residues: DNA-directed RNA polymerase subunit alpha (329 aa).

An alpha N-terminal domain (alpha-NTD) region spans residues 1–234 (MQGSVTEFLK…EQLDAFVELR (234 aa)). The segment at 248 to 329 (FDPILLRPVD…WPPASLADDL (82 aa)) is alpha C-terminal domain (alpha-CTD).

The protein belongs to the RNA polymerase alpha chain family. In terms of assembly, homodimer. The RNAP catalytic core consists of 2 alpha, 1 beta, 1 beta' and 1 omega subunit. When a sigma factor is associated with the core the holoenzyme is formed, which can initiate transcription.

The catalysed reaction is RNA(n) + a ribonucleoside 5'-triphosphate = RNA(n+1) + diphosphate. Functionally, DNA-dependent RNA polymerase catalyzes the transcription of DNA into RNA using the four ribonucleoside triphosphates as substrates. The protein is DNA-directed RNA polymerase subunit alpha of Shewanella amazonensis (strain ATCC BAA-1098 / SB2B).